The primary structure comprises 198 residues: Glycerol-3-phosphate acyltransferase (198 aa).

The next 3 helical transmembrane spans lie at 5-25, 114-134, and 154-176; these read AVIL…GYLI, VLIM…IAVL, and AFAL…LVAV.

This sequence belongs to the PlsY family. Probably interacts with PlsX.

The protein resides in the cell membrane. The catalysed reaction is an acyl phosphate + sn-glycerol 3-phosphate = a 1-acyl-sn-glycero-3-phosphate + phosphate. It participates in lipid metabolism; phospholipid metabolism. Catalyzes the transfer of an acyl group from acyl-phosphate (acyl-PO(4)) to glycerol-3-phosphate (G3P) to form lysophosphatidic acid (LPA). This enzyme utilizes acyl-phosphate as fatty acyl donor, but not acyl-CoA or acyl-ACP. The chain is Glycerol-3-phosphate acyltransferase from Desulforudis audaxviator (strain MP104C).